The following is an 80-amino-acid chain: Beta-toxin KAaH2 (80 aa).

An N-terminal signal peptide occupies residues 1–22; it reads MMKLMLFSIIVILFSLIGSIHG. The region spanning 25–80 is the LCN-type CS-alpha/beta domain; the sequence is VPGNYPLDSSDDTYLCAPLGENPSCIQICRKHGVKYGYCYAFQCWCEYLEDKNVKI. 3 disulfide bridges follow: Cys40-Cys63, Cys49-Cys68, and Cys53-Cys70.

Belongs to the long (3 C-C) scorpion toxin superfamily. Sodium/Potassium channel inhibitor family. As to expression, expressed by the venom gland.

It is found in the secreted. Functionally, weakly inhibits the vertebrate potassium channel Kv1.1/KCNA1. The polypeptide is Beta-toxin KAaH2 (Androctonus australis (Sahara scorpion)).